The chain runs to 567 residues: Phenylalanine--tRNA ligase beta subunit (567 aa).

Residues 287–362 (YFQEEVEFNV…IGEGLASFHP (76 aa)) enclose the B5 domain. Mg(2+)-binding residues include D340, D346, E349, and D350.

Belongs to the phenylalanyl-tRNA synthetase beta subunit family. Type 2 subfamily. Tetramer of two alpha and two beta subunits. It depends on Mg(2+) as a cofactor.

Its subcellular location is the cytoplasm. It carries out the reaction tRNA(Phe) + L-phenylalanine + ATP = L-phenylalanyl-tRNA(Phe) + AMP + diphosphate + H(+). This Borreliella afzelii (strain PKo) (Borrelia afzelii) protein is Phenylalanine--tRNA ligase beta subunit.